Reading from the N-terminus, the 131-residue chain is Profilin-3 (131 aa).

This sequence belongs to the profilin family. In terms of assembly, occurs in many kinds of cells as a complex with monomeric actin in a 1:1 ratio.

It localises to the cytoplasm. The protein resides in the cytoskeleton. In terms of biological role, binds to actin and affects the structure of the cytoskeleton. At high concentrations, profilin prevents the polymerization of actin, whereas it enhances it at low concentrations. By binding to PIP2, it inhibits the formation of IP3 and DG. This Triticum aestivum (Wheat) protein is Profilin-3 (PRO3).